The chain runs to 443 residues: ATP-dependent protease ATPase subunit HslU (443 aa).

Residues Ile-18, 60–65 (GVGKTE), Asp-256, Glu-321, and Arg-393 each bind ATP.

It belongs to the ClpX chaperone family. HslU subfamily. A double ring-shaped homohexamer of HslV is capped on each side by a ring-shaped HslU homohexamer. The assembly of the HslU/HslV complex is dependent on binding of ATP.

It localises to the cytoplasm. Its function is as follows. ATPase subunit of a proteasome-like degradation complex; this subunit has chaperone activity. The binding of ATP and its subsequent hydrolysis by HslU are essential for unfolding of protein substrates subsequently hydrolyzed by HslV. HslU recognizes the N-terminal part of its protein substrates and unfolds these before they are guided to HslV for hydrolysis. In Wigglesworthia glossinidia brevipalpis, this protein is ATP-dependent protease ATPase subunit HslU.